Consider the following 122-residue polypeptide: Large ribosomal subunit protein uL14c (122 aa).

Belongs to the universal ribosomal protein uL14 family. In terms of assembly, part of the 50S ribosomal subunit.

The protein localises to the plastid. It is found in the chloroplast. Functionally, binds to 23S rRNA. The sequence is that of Large ribosomal subunit protein uL14c from Anthoceros angustus (Hornwort).